The following is a 465-amino-acid chain: tRNA modification GTPase MnmE (465 aa).

Arginine 21, glutamate 85, and lysine 124 together coordinate (6S)-5-formyl-5,6,7,8-tetrahydrofolate. The 168-residue stretch at glycine 220 to histidine 387 folds into the TrmE-type G domain. Asparagine 230 lines the K(+) pocket. GTP contacts are provided by residues asparagine 230–threonine 235, serine 249–threonine 255, aspartate 274–glycine 277, and asparagine 337–aspartate 340. Mg(2+) is bound at residue serine 234. Residues serine 249, isoleucine 251, and threonine 254 each contribute to the K(+) site. Position 255 (threonine 255) interacts with Mg(2+). Position 465 (lysine 465) interacts with (6S)-5-formyl-5,6,7,8-tetrahydrofolate.

This sequence belongs to the TRAFAC class TrmE-Era-EngA-EngB-Septin-like GTPase superfamily. TrmE GTPase family. In terms of assembly, homodimer. Heterotetramer of two MnmE and two MnmG subunits. It depends on K(+) as a cofactor.

The protein resides in the cytoplasm. Functionally, exhibits a very high intrinsic GTPase hydrolysis rate. Involved in the addition of a carboxymethylaminomethyl (cmnm) group at the wobble position (U34) of certain tRNAs, forming tRNA-cmnm(5)s(2)U34. This chain is tRNA modification GTPase MnmE, found in Bacteroides thetaiotaomicron (strain ATCC 29148 / DSM 2079 / JCM 5827 / CCUG 10774 / NCTC 10582 / VPI-5482 / E50).